Reading from the N-terminus, the 151-residue chain is Neuroglobin (151 aa).

Positions 1–149 constitute a Globin domain; sequence MERPEPELIR…VVQAMSRGWD (149 aa). Residues histidine 64 and histidine 96 each coordinate heme b.

Belongs to the globin family. In terms of assembly, monomer. Homodimer and homotetramer; disulfide-linked. Mainly monomeric but also detected as part of homodimers and homotetramers. Interacts with 14-3-3 proteins; regulates the phosphorylation of NGB. Could interact (ferrous form) with G-alpha(i) proteins (GTP-bound form). Phosphorylated during hypoxia by ERK1/ERK2. Phosphorylation regulates the heme pocket hexacoordination preventing the association of His-64 with the heme metal center. Thereby, promotes the access of dioxygen and nitrite to the heme and stimulates the nitrite reductase activity. Phosphorylation during hypoxia is stabilized by 14-3-3 proteins.

The protein resides in the cytoplasm. Its subcellular location is the cytosol. The protein localises to the mitochondrion matrix. It carries out the reaction Fe(III)-heme b-[protein] + nitric oxide + H2O = Fe(II)-heme b-[protein] + nitrite + 2 H(+). In terms of biological role, monomeric globin with a bis-histidyl six-coordinate heme-iron atom through which it can bind dioxygen, carbon monoxide and nitric oxide. Could help transport oxygen and increase its availability to the metabolically active neuronal tissues, though its low quantity in tissues as well as its high affinity for dioxygen, which may limit its oxygen-releasing ability, argue against it. The ferrous/deoxygenated form exhibits a nitrite reductase activity and it could produce nitric oxide which in turn inhibits cellular respiration in response to hypoxia. In its ferrous/deoxygenated state, it may also exhibit GDI (Guanine nucleotide Dissociation Inhibitor) activity toward heterotrimeric G-alpha proteins, thereby regulating signal transduction to facilitate neuroprotective responses in the wake of hypoxia and associated oxidative stress. This Macaca mulatta (Rhesus macaque) protein is Neuroglobin.